The sequence spans 275 residues: Tryptophan synthase alpha chain (275 aa).

Glu51 (proton acceptor) is an active-site residue.

This sequence belongs to the TrpA family. As to quaternary structure, tetramer of two alpha and two beta chains.

It catalyses the reaction (1S,2R)-1-C-(indol-3-yl)glycerol 3-phosphate + L-serine = D-glyceraldehyde 3-phosphate + L-tryptophan + H2O. Its pathway is amino-acid biosynthesis; L-tryptophan biosynthesis; L-tryptophan from chorismate: step 5/5. In terms of biological role, the alpha subunit is responsible for the aldol cleavage of indoleglycerol phosphate to indole and glyceraldehyde 3-phosphate. The protein is Tryptophan synthase alpha chain of Caulobacter vibrioides (strain ATCC 19089 / CIP 103742 / CB 15) (Caulobacter crescentus).